The primary structure comprises 232 residues: 2,3-bisphosphoglycerate-dependent phosphoglycerate mutase (232 aa).

Residues 10–17 (RHGESQWN), 23–24 (TG), Arg62, 89–92 (ERHY), Lys100, 116–117 (RR), and 185–186 (GN) contribute to the substrate site. His11 (tele-phosphohistidine intermediate) is an active-site residue. Glu89 (proton donor/acceptor) is an active-site residue.

This sequence belongs to the phosphoglycerate mutase family. BPG-dependent PGAM subfamily. As to quaternary structure, homodimer.

The catalysed reaction is (2R)-2-phosphoglycerate = (2R)-3-phosphoglycerate. Its pathway is carbohydrate degradation; glycolysis; pyruvate from D-glyceraldehyde 3-phosphate: step 3/5. Catalyzes the interconversion of 2-phosphoglycerate and 3-phosphoglycerate. In Blochmanniella floridana, this protein is 2,3-bisphosphoglycerate-dependent phosphoglycerate mutase.